Consider the following 430-residue polypeptide: Vitamin B6 salvage pathway transcriptional repressor PtsJ (430 aa).

One can recognise an HTH gntR-type domain in the interval 4-72 (GKTANEIFDS…GRNGTVIKGS (69 aa)). Residues 32 to 51 (VRELASELKVNRNTVAAAYK) constitute a DNA-binding region (H-T-H motif). The interval 70 to 95 (KGSPSPVALEGGDPHTPLHDLSGGNP) is disordered. N6-(pyridoxal phosphate)lysine is present on lysine 282.

It in the C-terminal section; belongs to the class-I pyridoxal-phosphate-dependent aminotransferase family. Homodimer in both apo- and holo-forms.

Acts as a transcriptional repressor of the pdxK gene, encoding a pyridoxal kinase involved in the vitamin B6 salvage pathway. Also represses transcription of its own gene. Binds to the ptsJ-pdxK intergenic region, but does not bind pdxY and pdxH promoters. Among all six B6 vitamers, only pyridoxal 5'-phosphate (PLP) clearly binds to the protein and acts as an effector molecule for PtsJ, inducing a protein conformational change that increases affinity for DNA. Thus, PLP stabilizes protein-DNA interactions, reinforcing repression. The chain is Vitamin B6 salvage pathway transcriptional repressor PtsJ from Salmonella typhimurium (strain LT2 / SGSC1412 / ATCC 700720).